We begin with the raw amino-acid sequence, 556 residues long: Dihydroxy-acid dehydratase (556 aa).

Residue Asp-78 participates in Mg(2+) binding. Cys-119 contributes to the [2Fe-2S] cluster binding site. The Mg(2+) site is built by Asp-120 and Lys-121. Lys-121 is modified (N6-carboxylysine). [2Fe-2S] cluster is bound at residue Cys-195. Glu-446 serves as a coordination point for Mg(2+). Residue Ser-472 is the Proton acceptor of the active site.

The protein belongs to the IlvD/Edd family. As to quaternary structure, homodimer. The cofactor is [2Fe-2S] cluster. Requires Mg(2+) as cofactor.

It carries out the reaction (2R)-2,3-dihydroxy-3-methylbutanoate = 3-methyl-2-oxobutanoate + H2O. It catalyses the reaction (2R,3R)-2,3-dihydroxy-3-methylpentanoate = (S)-3-methyl-2-oxopentanoate + H2O. Its pathway is amino-acid biosynthesis; L-isoleucine biosynthesis; L-isoleucine from 2-oxobutanoate: step 3/4. It functions in the pathway amino-acid biosynthesis; L-valine biosynthesis; L-valine from pyruvate: step 3/4. Its function is as follows. Functions in the biosynthesis of branched-chain amino acids. Catalyzes the dehydration of (2R,3R)-2,3-dihydroxy-3-methylpentanoate (2,3-dihydroxy-3-methylvalerate) into 2-oxo-3-methylpentanoate (2-oxo-3-methylvalerate) and of (2R)-2,3-dihydroxy-3-methylbutanoate (2,3-dihydroxyisovalerate) into 2-oxo-3-methylbutanoate (2-oxoisovalerate), the penultimate precursor to L-isoleucine and L-valine, respectively. This Desulfatibacillum aliphaticivorans protein is Dihydroxy-acid dehydratase.